We begin with the raw amino-acid sequence, 38 residues long: Beta-galactosidase (38 aa).

This sequence belongs to the glycosyl hydrolase 35 family. In terms of assembly, heterodimer of a large and a small subunit. The small subunit is N-glycosylated.

It catalyses the reaction Hydrolysis of terminal non-reducing beta-D-galactose residues in beta-D-galactosides.. In terms of biological role, involved in cell wall degradation. Degrades polysaccharides containing beta-(1--&gt;4)-linked galactans, acting as an exo-(1--&gt;4)-beta-D-galactanase. The protein is Beta-galactosidase of Hordeum vulgare (Barley).